We begin with the raw amino-acid sequence, 215 residues long: 3-demethoxyubiquinol 3-hydroxylase (215 aa).

Residues Glu64, Glu94, His97, Glu146, Glu178, and His181 each coordinate Fe cation.

Belongs to the COQ7 family. Requires Fe cation as cofactor.

The protein localises to the cell membrane. It catalyses the reaction a 5-methoxy-2-methyl-3-(all-trans-polyprenyl)benzene-1,4-diol + AH2 + O2 = a 3-demethylubiquinol + A + H2O. The protein operates within cofactor biosynthesis; ubiquinone biosynthesis. In terms of biological role, catalyzes the hydroxylation of 2-nonaprenyl-3-methyl-6-methoxy-1,4-benzoquinol during ubiquinone biosynthesis. This chain is 3-demethoxyubiquinol 3-hydroxylase, found in Azotobacter vinelandii (strain DJ / ATCC BAA-1303).